A 146-amino-acid polypeptide reads, in one-letter code: 3-dehydroquinate dehydratase (146 aa).

Tyr24 serves as the catalytic Proton acceptor. Asn73, His79, and Asp86 together coordinate substrate. Residue His99 is the Proton donor of the active site. Substrate contacts are provided by residues 100–101 (LS) and Arg110.

The protein belongs to the type-II 3-dehydroquinase family. Homododecamer.

It carries out the reaction 3-dehydroquinate = 3-dehydroshikimate + H2O. The protein operates within metabolic intermediate biosynthesis; chorismate biosynthesis; chorismate from D-erythrose 4-phosphate and phosphoenolpyruvate: step 3/7. In terms of biological role, catalyzes a trans-dehydration via an enolate intermediate. The chain is 3-dehydroquinate dehydratase from Shewanella baltica (strain OS223).